The chain runs to 184 residues: uncharacterized protein (184 aa).

Positions H146–P177 are disordered. The span at S150 to A172 shows a compositional bias: polar residues.

This is an uncharacterized protein from Picosynechococcus sp. (strain ATCC 27264 / PCC 7002 / PR-6) (Agmenellum quadruplicatum).